Consider the following 250-residue polypeptide: Ditrans,polycis-undecaprenyl-diphosphate synthase ((2E,6E)-farnesyl-diphosphate specific) (250 aa).

Residue D27 is part of the active site. Mg(2+) is bound at residue D27. Substrate is bound by residues 28–31 (GNGR), W32, R40, H44, and 72–74 (SSE). The active-site Proton acceptor is the N75. Substrate is bound by residues W76, R78, and R195. H200 contributes to the Mg(2+) binding site. Position 201-203 (201-203 (RIS)) interacts with substrate. E214 is a binding site for Mg(2+).

The protein belongs to the UPP synthase family. Homodimer. The cofactor is Mg(2+).

The enzyme catalyses 8 isopentenyl diphosphate + (2E,6E)-farnesyl diphosphate = di-trans,octa-cis-undecaprenyl diphosphate + 8 diphosphate. In terms of biological role, catalyzes the sequential condensation of isopentenyl diphosphate (IPP) with (2E,6E)-farnesyl diphosphate (E,E-FPP) to yield (2Z,6Z,10Z,14Z,18Z,22Z,26Z,30Z,34E,38E)-undecaprenyl diphosphate (di-trans,octa-cis-UPP). UPP is the precursor of glycosyl carrier lipid in the biosynthesis of bacterial cell wall polysaccharide components such as peptidoglycan and lipopolysaccharide. In Blochmanniella floridana, this protein is Ditrans,polycis-undecaprenyl-diphosphate synthase ((2E,6E)-farnesyl-diphosphate specific).